The sequence spans 437 residues: Trigger factor (437 aa).

A PPIase FKBP-type domain is found at Asp163–Pro248.

This sequence belongs to the FKBP-type PPIase family. Tig subfamily.

The protein localises to the cytoplasm. It catalyses the reaction [protein]-peptidylproline (omega=180) = [protein]-peptidylproline (omega=0). In terms of biological role, involved in protein export. Acts as a chaperone by maintaining the newly synthesized protein in an open conformation. Functions as a peptidyl-prolyl cis-trans isomerase. In Variovorax paradoxus (strain S110), this protein is Trigger factor.